The primary structure comprises 62 residues: Conotoxin Pn-B02 (62 aa).

Positions 1 to 19 (MRCLPVFIILLLLIASAPS) are cleaved as a signal peptide. The propeptide occupies 20-49 (FDALPKTEDNVPLSSFHDNLKRTRRIHLNI). An Alanine amide modification is found at Ala-61.

Belongs to the conotoxin T superfamily. Contains 2 disulfide bonds that can be either 'C1-C3, C2-C4' or 'C1-C4, C2-C3', since these disulfide connectivities have been observed for conotoxins with cysteine framework V (for examples, see AC P0DQQ7 and AC P81755). Expressed by the venom duct.

It is found in the secreted. The chain is Conotoxin Pn-B02 from Conus pennaceus (Feathered cone).